Here is a 435-residue protein sequence, read N- to C-terminus: Tektin-4 (435 aa).

Positions 60–69 (DQSERQRHES) are enriched in basic and acidic residues. The disordered stretch occupies residues 60–96 (DQSERQRHESQQLATETQALAQRTQQDSTRTVGERLQ). Low complexity predominate over residues 70-85 (QQLATETQALAQRTQQ). Coiled coils occupy residues 102 to 180 (KSEL…LLKR), 310 to 336 (LHKT…DKEA), and 363 to 411 (FRLL…TNSL).

It belongs to the tektin family. As to quaternary structure, microtubule inner protein component of sperm flagellar doublet microtubules. Post-translationally, ubiquitinated, leading to its degradation. Deubiquitinated by USP16, promoting its stability. In terms of tissue distribution, strongly expressed in spermatozoa. Also detected at low levels in pancreas. Expressed in airway epithelial cells.

The protein localises to the cytoplasm. Its subcellular location is the cytoskeleton. It localises to the cilium axoneme. It is found in the flagellum axoneme. Microtubule inner protein (MIP) part of the dynein-decorated doublet microtubules (DMTs) in cilia and flagellar axoneme. Forms filamentous polymers in the walls of ciliary and flagellar microtubules. Contributes to normal sperm motility. This is Tektin-4 from Homo sapiens (Human).